A 333-amino-acid chain; its full sequence is uncharacterized protein (333 aa).

Positions 45 to 318 constitute a Fe/B12 periplasmic-binding domain; it reads NVIVSDSMFI…EYVKIIHPKI (274 aa).

This is an uncharacterized protein from Methanocaldococcus jannaschii (strain ATCC 43067 / DSM 2661 / JAL-1 / JCM 10045 / NBRC 100440) (Methanococcus jannaschii).